The sequence spans 302 residues: Pentatricopeptide repeat-containing protein At4g38150 (302 aa).

Over residues 26–40 (SATRFLSTGDNGQVD) the composition is skewed to polar residues. Disordered stretches follow at residues 26–82 (SATR…TTLS) and 94–116 (VNQDSRETPKPEQYPQEPLPPPE). Residues 54–67 (LRGERSSNSHREPP) are compositionally biased toward basic and acidic residues. 4 PPR repeats span residues 130 to 164 (LIPNAVAMLDGLCKDGLVQEAMKLFGLMRDKGTIP), 165 to 199 (EVVIYTAVVEAFCKAHKIEDAKRIFRKMQNNGIAP), 200 to 234 (NAFSYGVLVQGLYNCNMLDDAVAFCSEMLESGHSP), and 235 to 269 (NVPTFVELVDALCRVKGVEQAQSAIDTLNQKGFAV).

This sequence belongs to the PPR family. P subfamily.

The sequence is that of Pentatricopeptide repeat-containing protein At4g38150 from Arabidopsis thaliana (Mouse-ear cress).